We begin with the raw amino-acid sequence, 100 residues long: Small ribosomal subunit protein uS14c (100 aa).

It belongs to the universal ribosomal protein uS14 family. In terms of assembly, part of the 30S ribosomal subunit.

Its subcellular location is the plastid. It localises to the chloroplast. In terms of biological role, binds 16S rRNA, required for the assembly of 30S particles. The protein is Small ribosomal subunit protein uS14c of Glycine max (Soybean).